Reading from the N-terminus, the 837-residue chain is Dapper homolog 2 (837 aa).

A coiled-coil region spans residues 65–113 (ENVSKEELRLEATLSLLKQQLTRLRRQDVGLKTHLQQLDQQITELKLDV). Disordered stretches follow at residues 189–265 (ADES…PKYQ), 424–497 (HGKH…DKSS), 512–564 (GSQR…KQSG), 600–649 (QQIP…HTQR), and 738–782 (EMSD…EDEG). 2 stretches are compositionally biased toward polar residues: residues 246-265 (VKSS…PKYQ) and 432-445 (LDLQ…NNTA). 3 stretches are compositionally biased toward basic and acidic residues: residues 456 to 466 (ASEKRSGHFPK), 486 to 496 (EGSRASCHDKS), and 548 to 560 (LSRE…RTDL). Residues 741 to 759 (DYTTNRFGDSESSQGSQTA) show a composition bias toward polar residues. The segment covering 768 to 782 (LDEEDLLEEEEEDEG) has biased composition (acidic residues). The PDZ-binding motif lies at 834 to 837 (MTLV).

It belongs to the dapper family. As to quaternary structure, interacts with dvl2.

It is found in the cytoplasm. The protein localises to the late endosome. It localises to the nucleus. Its subcellular location is the cell membrane. Functionally, involved in regulation of intracellular signaling pathways during development. Specifically thought to play a role in canonical and/or non-canonical Wnt signaling pathways through interaction with DSH (Dishevelled) family proteins. Positive regulator of the Wnt signaling pathway which acts downstream of wnt1 indicative for non-canonical Wnt signaling. Also negatively regulates the Nodal signaling pathway, possibly by promoting the lysosomal degradation of Nodal receptors. Required for convergent extension movements in gastrulation. The sequence is that of Dapper homolog 2 (dact2) from Danio rerio (Zebrafish).